The following is a 186-amino-acid chain: Peptide deformylase (186 aa).

Cys113 and His156 together coordinate Fe cation. Glu157 is an active-site residue. Residue His160 coordinates Fe cation.

It belongs to the polypeptide deformylase family. Requires Fe(2+) as cofactor.

The catalysed reaction is N-terminal N-formyl-L-methionyl-[peptide] + H2O = N-terminal L-methionyl-[peptide] + formate. Functionally, removes the formyl group from the N-terminal Met of newly synthesized proteins. Requires at least a dipeptide for an efficient rate of reaction. N-terminal L-methionine is a prerequisite for activity but the enzyme has broad specificity at other positions. This is Peptide deformylase from Ligilactobacillus salivarius (strain UCC118) (Lactobacillus salivarius).